The sequence spans 197 residues: Pyridoxal 5'-phosphate synthase subunit PdxT (197 aa).

52–54 contributes to the L-glutamine binding site; that stretch reads GES. Cys84 serves as the catalytic Nucleophile. Residues Arg116 and 143-144 each bind L-glutamine; that span reads IR. Active-site charge relay system residues include His179 and Glu181.

It belongs to the glutaminase PdxT/SNO family. In the presence of PdxS, forms a dodecamer of heterodimers. Only shows activity in the heterodimer.

The enzyme catalyses aldehydo-D-ribose 5-phosphate + D-glyceraldehyde 3-phosphate + L-glutamine = pyridoxal 5'-phosphate + L-glutamate + phosphate + 3 H2O + H(+). It catalyses the reaction L-glutamine + H2O = L-glutamate + NH4(+). The protein operates within cofactor biosynthesis; pyridoxal 5'-phosphate biosynthesis. Functionally, catalyzes the hydrolysis of glutamine to glutamate and ammonia as part of the biosynthesis of pyridoxal 5'-phosphate. The resulting ammonia molecule is channeled to the active site of PdxS. This is Pyridoxal 5'-phosphate synthase subunit PdxT from Ignicoccus hospitalis (strain KIN4/I / DSM 18386 / JCM 14125).